The chain runs to 201 residues: Proteasome subunit beta type-2 (201 aa).

Methionine 1 is subject to N-acetylmethionine.

The protein belongs to the peptidase T1B family. In terms of assembly, the 26S proteasome consists of a 20S proteasome core and two 19S regulatory subunits. The 20S proteasome core is a barrel-shaped complex made of 28 subunits that are arranged in four stacked rings. The two outer rings are each formed by seven alpha subunits, and the two inner rings are formed by seven beta subunits. The proteolytic activity is exerted by three beta-subunits PSMB5, PSMB6 and PSMB7. In terms of tissue distribution, detected in liver (at protein level).

It localises to the cytoplasm. The protein localises to the nucleus. Functionally, non-catalytic component of the 20S core proteasome complex involved in the proteolytic degradation of most intracellular proteins. This complex plays numerous essential roles within the cell by associating with different regulatory particles. Associated with two 19S regulatory particles, forms the 26S proteasome and thus participates in the ATP-dependent degradation of ubiquitinated proteins. The 26S proteasome plays a key role in the maintenance of protein homeostasis by removing misfolded or damaged proteins that could impair cellular functions, and by removing proteins whose functions are no longer required. Associated with the PA200 or PA28, the 20S proteasome mediates ubiquitin-independent protein degradation. This type of proteolysis is required in several pathways including spermatogenesis (20S-PA200 complex) or generation of a subset of MHC class I-presented antigenic peptides (20S-PA28 complex). This is Proteasome subunit beta type-2 (Psmb2) from Mus musculus (Mouse).